Reading from the N-terminus, the 865-residue chain is Alanine--tRNA ligase (865 aa).

Positions 554, 558, 656, and 660 each coordinate Zn(2+).

It belongs to the class-II aminoacyl-tRNA synthetase family. Requires Zn(2+) as cofactor.

It localises to the cytoplasm. It carries out the reaction tRNA(Ala) + L-alanine + ATP = L-alanyl-tRNA(Ala) + AMP + diphosphate. Functionally, catalyzes the attachment of alanine to tRNA(Ala) in a two-step reaction: alanine is first activated by ATP to form Ala-AMP and then transferred to the acceptor end of tRNA(Ala). Also edits incorrectly charged Ser-tRNA(Ala) and Gly-tRNA(Ala) via its editing domain. The chain is Alanine--tRNA ligase from Francisella philomiragia subsp. philomiragia (strain ATCC 25017 / CCUG 19701 / FSC 153 / O#319-036).